Here is a 244-residue protein sequence, read N- to C-terminus: Secreted RxLR effector protein RXLR-C05 (244 aa).

The signal sequence occupies residues 1–21; the sequence is MRGAFYVATAFLIASSTRTAA. Residues 37–46 show a composition bias toward basic and acidic residues; sequence LPVGDSDTKS. The interval 37 to 56 is disordered; it reads LPVGDSDTKSLPRRSLKGSG. The short motif at 50–68 is the RxLR-dEER element; the sequence is RSLKGSGDRLEIPVAEEER.

The protein belongs to the RxLR effector family.

It is found in the secreted. The protein resides in the host cytoplasm. The protein localises to the host nucleus. Functionally, secreted effector that suppresses pattern-triggered immunity (PTI) in plant host. This Plasmopara halstedii (Downy mildew of sunflower) protein is Secreted RxLR effector protein RXLR-C05.